The chain runs to 468 residues: MQRVHAFGDDALGDLDAVGLADAIRAGWVSRADVIEAAIVRTEAVNPALGGLAYEAFQWARQTASKAGSGFFSGVPTFIKDNIDVAGQPTMRGSDAWVPRNAFDDGEFTRLYLATGPVSLGKTQLSEFGFSASAEHMRLGPVRNPWDTDYTAGASSSGSGAFVAAGVVPMAHANDGGGSIRIPASCNGLVGLKPSRGRLPLDSELRRLPVGIVVNGVLTRSVRDTAAFYREAERIWHNPKLPPVGDVTQPGRQRLRIAVVTRSVQRECSPELRELTLKSARLLEELGHRVERVAEPPVPPNFPDDFLLYWGLLAAMQVRTGRLAFGNTFDRTKLDSLTLGLDRHASRNMHRLPKAIMRLRRLRRRTADFFATYDVLLTPTVADETPRIGYLTPTDYQQVMDRLMGWVAFTPLQNVTGEPAISLPLAQSADGMPVGMMFTADFGQEAQLLELAFELEEARPWARIQIGD.

Catalysis depends on charge relay system residues Lys80 and Ser155. The active-site Acyl-ester intermediate is Ser179.

Belongs to the amidase family.

It carries out the reaction a monocarboxylic acid amide + H2O = a monocarboxylate + NH4(+). The sequence is that of Putative amidase AmiC (amiC) from Mycobacterium leprae (strain TN).